The sequence spans 504 residues: Maturase K (504 aa).

Belongs to the intron maturase 2 family. MatK subfamily.

It is found in the plastid. The protein resides in the chloroplast. Its function is as follows. Usually encoded in the trnK tRNA gene intron. Probably assists in splicing its own and other chloroplast group II introns. The chain is Maturase K from Hamamelis japonica (Japanese witch hazel).